The sequence spans 198 residues: Holliday junction resolvase RecU (198 aa).

Residues 1 to 21 (MVNYPHKLSSQKRQPSLSQPK) form a disordered region. Positions 11-21 (QKRQPSLSQPK) are enriched in polar residues. 4 residues coordinate Mg(2+): Thr81, Asp83, Glu96, and Gln115.

It belongs to the RecU family. Mg(2+) serves as cofactor.

It is found in the cytoplasm. It catalyses the reaction Endonucleolytic cleavage at a junction such as a reciprocal single-stranded crossover between two homologous DNA duplexes (Holliday junction).. Endonuclease that resolves Holliday junction intermediates in genetic recombination. Cleaves mobile four-strand junctions by introducing symmetrical nicks in paired strands. Promotes annealing of linear ssDNA with homologous dsDNA. Required for DNA repair, homologous recombination and chromosome segregation. The protein is Holliday junction resolvase RecU of Streptococcus pneumoniae (strain Taiwan19F-14).